The following is a 345-amino-acid chain: Esterase (345 aa).

The N-terminal stretch at 1-39 is a signal peptide; that stretch reads MSSAMRKTTNSPVVRRLTAAAVALGSCLALAGPAGSAGA. 3 disulfides stabilise this stretch: Cys-73/Cys-103, Cys-156/Cys-180, and Cys-236/Cys-294.

The protein localises to the secreted. The chain is Esterase (estA) from Streptomyces scabiei.